The chain runs to 363 residues: FMNH(2)-dependent dimethylsulfone monooxygenase (363 aa).

This sequence belongs to the SsuD family.

It carries out the reaction dimethyl sulfone + FMNH2 + O2 = methanesulfinate + FMN + formaldehyde + H2O + 2 H(+). In terms of biological role, involved in the dimethyl sulfide degradation pathway. Catalyzes the oxidation of dimethylsulfone (DMSO2) to yield methanesulfinate, which is oxidized spontaneously to methanesulfonate in the presence of dioxygen and FMNH(2). This is FMNH(2)-dependent dimethylsulfone monooxygenase from Pseudomonas putida (Arthrobacter siderocapsulatus).